The primary structure comprises 216 residues: Pyrophosphatase PpaX (216 aa).

Residue D9 is the Nucleophile of the active site.

Belongs to the HAD-like hydrolase superfamily. PpaX family. Mg(2+) is required as a cofactor.

The catalysed reaction is diphosphate + H2O = 2 phosphate + H(+). In terms of biological role, hydrolyzes pyrophosphate formed during P-Ser-HPr dephosphorylation by HPrK/P. Might play a role in controlling the intracellular pyrophosphate pool. This Bacillus cereus (strain G9842) protein is Pyrophosphatase PpaX.